Consider the following 185-residue polypeptide: Ribosome-recycling factor (185 aa).

It belongs to the RRF family.

The protein localises to the cytoplasm. Functionally, responsible for the release of ribosomes from messenger RNA at the termination of protein biosynthesis. May increase the efficiency of translation by recycling ribosomes from one round of translation to another. This Shewanella sp. (strain ANA-3) protein is Ribosome-recycling factor.